A 149-amino-acid polypeptide reads, in one-letter code: Calmodulin (149 aa).

At alanine 2 the chain carries N-acetylalanine. 4 EF-hand domains span residues 8–43 (EQIS…LGQN), 44–79 (PTEA…KMRD), 81–116 (DSEE…LGEK), and 117–149 (LTDN…MLSK). Ca(2+) is bound by residues aspartate 21, aspartate 23, aspartate 25, threonine 27, glutamate 32, aspartate 57, aspartate 59, asparagine 61, threonine 63, glutamate 68, aspartate 94, aspartate 96, asparagine 98, tyrosine 100, glutamate 105, aspartate 130, aspartate 132, aspartate 134, glutamine 136, and glutamate 141.

Belongs to the calmodulin family.

Functionally, calmodulin mediates the control of a large number of enzymes, ion channels and other proteins by Ca(2+). Among the enzymes to be stimulated by the calmodulin-Ca(2+) complex are a number of protein kinases and phosphatases. This chain is Calmodulin (CMD1), found in Pleurotus ostreatus (Oyster mushroom).